The following is a 149-amino-acid chain: Oligosaccharyltransferase complex subunit ostc-A (149 aa).

Topologically, residues 1–32 are cytoplasmic; sequence MESLYRVPFTVLECPNLKLKKPSWLHMPSAMT. The chain crosses the membrane as a helical span at residues 33–53; the sequence is VYAMVVVSYFLITGGIIYDVI. The Extracellular segment spans residues 54–83; sequence VEPPSVGSMTDEHGHQRPVAFLAYRVNGQY. Residues 84–104 form a helical membrane-spanning segment; it reads IMEGLASSFLFTMGGLGFIIL. At 105–117 the chain is on the cytoplasmic side; sequence DRSNTPNIPKLNR. Residues 118 to 138 form a helical membrane-spanning segment; that stretch reads FLLLFIGFVCVLLSFFMARVF. Over 139–149 the chain is Extracellular; it reads MRMKLPGYLMG.

Belongs to the OSTC family. As to quaternary structure, specific component of the STT3A-containing form of the oligosaccharyltransferase (OST) complex.

The protein localises to the membrane. It functions in the pathway protein modification; protein glycosylation. In terms of biological role, specific component of the STT3A-containing form of the oligosaccharyl transferase (OST) complex that catalyzes the initial transfer of a defined glycan (Glc(3)Man(9)GlcNAc(2) in eukaryotes) from the lipid carrier dolichol-pyrophosphate to an asparagine residue within an Asn-X-Ser/Thr consensus motif in nascent polypeptide chains, the first step in protein N-glycosylation. N-glycosylation occurs cotranslationally and the complex associates with the Sec61 complex at the channel-forming translocon complex that mediates protein translocation across the endoplasmic reticulum (ER). All subunits are required for a maximal enzyme activity. This Xenopus laevis (African clawed frog) protein is Oligosaccharyltransferase complex subunit ostc-A.